The chain runs to 274 residues: NAD(P)H dehydrogenase [quinone] 1 (274 aa).

FAD-binding positions include His-12, 18 to 19, and Gln-67; that span reads FN. Ser-82 carries the phosphoserine modification. 104 to 107 provides a ligand contact to FAD; that stretch reads LQWF. 126–128 serves as a coordination point for substrate; the sequence is AYT. FAD-binding positions include 148–151, Tyr-156, and Arg-201; that span reads TTGG. Residues 225-274 form an important for apoenzyme conformational stability region; sequence PSSLFDLNFQAGFLMKKEVQDEEKNKKFGLSVGHHLGKSIPTDNQIKARK. Glycyl lysine isopeptide (Lys-Gly) (interchain with G-Cter in SUMO2) cross-links involve residues Lys-250 and Lys-251.

This sequence belongs to the NAD(P)H dehydrogenase (quinone) family. As to quaternary structure, homodimer. Interacts with PDLIM4 isoform 2; this interaction stabilizes PDLIM4 isoform 2 in response to oxidative stress and protects it from ubiquitin-independent degradation by the core 20S proteasome. Interacts with TP73 (via SAM domain); this interaction is NADH-dependent, stabilizes TP73 in response to oxidative stress and protects it from ubiquitin-independent degradation by the 20S proteasome. Interacts with TP53; this interaction is NADH-dependent, stabilizes TP53 in response to oxidative stress and protects it from ubiquitin-independent degradation by the 20S proteasome. FAD serves as cofactor.

It localises to the cytoplasm. Its subcellular location is the cytosol. It catalyses the reaction a quinone + NADH + H(+) = a quinol + NAD(+). The enzyme catalyses a quinone + NADPH + H(+) = a quinol + NADP(+). The catalysed reaction is ubiquinone-10 + NADH + H(+) = ubiquinol-10 + NAD(+). It carries out the reaction menadione + NADH + H(+) = menadiol + NAD(+). In terms of biological role, flavin-containing quinone reductase that catalyzes two-electron reduction of quinones to hydroquinones using either NADH or NADPH as electron donors. In a ping-pong kinetic mechanism, the electrons are sequentially transferred from NAD(P)H to flavin cofactor and then from reduced flavin to the quinone, bypassing the formation of semiquinone and reactive oxygen species. Regulates cellular redox state primarily through quinone detoxification. Reduces components of plasma membrane redox system such as coenzyme Q and vitamin quinones, producing antioxidant hydroquinone forms. In the process may function as superoxide scavenger to prevent hydroquinone oxidation and facilitate excretion. Alternatively, can activate quinones and their derivatives by generating redox reactive hydroquinones with DNA cross-linking antitumor potential. Acts as a gatekeeper of the core 20S proteasome known to degrade proteins with unstructured regions. Upon oxidative stress, interacts with tumor suppressors TP53 and TP73 in a NADH-dependent way and inhibits their ubiquitin-independent degradation by the 20S proteasome. The protein is NAD(P)H dehydrogenase [quinone] 1 (NQO1) of Pongo abelii (Sumatran orangutan).